Consider the following 681-residue polypeptide: Sodium/glucose cotransporter 4 (681 aa).

The Extracellular segment spans residues 1-36 (MSKELAAMGPGASGDGVRTETAPHIALDSRVGLHAY). Residues 37 to 57 (DISVVVIYFVFVIAVGIWSSI) traverse the membrane as a helical segment. Residues 58 to 75 (RASRGTIGGYFLAGRSMS) are Cytoplasmic-facing. A helical transmembrane segment spans residues 76–98 (WWPIGASLMSSNVGSGLFIGLAG). The Extracellular portion of the chain corresponds to 99–114 (TGAAGGLAVGGFEWNA). Residues 115 to 135 (TWLLLALGWVFVPVYIAAGVV) traverse the membrane as a helical segment. Topologically, residues 136 to 157 (TMPQYLKKRFGGQRIQVYMSVL) are cytoplasmic. The chain crosses the membrane as a helical span at residues 158 to 178 (SLILYIFTKISTDIFSGALFI). At 179 to 190 (QMALGWNLYLST) the chain is on the extracellular side. Residues 191 to 211 (GILLVVTAVYTIAGGLMAVIY) traverse the membrane as a helical segment. Residues 212 to 217 (TDALQT) are Cytoplasmic-facing. The chain crosses the membrane as a helical span at residues 218-238 (VIMVGGALVLMFLGFQDVGWY). Residues 239–275 (PGLEQRYRQAIPNVTVPNTTCHLPRPDAFHILRDPVS) lie on the Extracellular side of the membrane. Asn251 carries an N-linked (GlcNAc...) asparagine glycan. The chain crosses the membrane as a helical span at residues 276 to 296 (GDIPWPGLIFGLTVLATWCWC). Residues 297 to 317 (TDQVIVQRSLSAKSLSHAKGG) are Cytoplasmic-facing. A helical membrane pass occupies residues 318–338 (SVLGGYLKILPMFFIVMPGMI). At 339–383 (SRALFPDEVGCVDPDVCQRICGARVGCSNIAYPKLVMALMPVGLR) the chain is on the extracellular side. The chain crosses the membrane as a helical span at residues 384-406 (GLMIAVIMAALMSSLTSIFNSSS). The Cytoplasmic portion of the chain corresponds to 407-427 (TLFTIDVWQRFRRKSTEQELM). The helical transmembrane segment at 428 to 448 (VVGRVFVVFLVVISILWIPII) threads the bilayer. The Extracellular segment spans residues 449 to 459 (QSSNSGQLFDY). The chain crosses the membrane as a helical span at residues 460–480 (IQAVTSYLAPPITALFLLAIF). Topologically, residues 481–487 (CKRVTEP) are cytoplasmic. The chain crosses the membrane as a helical span at residues 488 to 508 (GAFWGLVFGLGVGLLRMILEF). Topologically, residues 509-530 (SYPAPACGEVDRRPAVLKDFHY) are extracellular. The chain crosses the membrane as a helical span at residues 531-551 (LYFAILLCGLTAIVIVIVSLC). Residues 552-660 (TTPIPEEQLT…SIEEEPLWRH (109 aa)) lie on the Cytoplasmic side of the membrane. The segment covering 579 to 591 (AHESTPEISERPA) has biased composition (basic and acidic residues). The interval 579–614 (AHESTPEISERPAGECPAGGGAAENSSLGQEQPEAP) is disordered. A phosphoserine mark is found at Ser604 and Ser605. The helical transmembrane segment at 661 to 681 (VCNINAVLLLAINIFLWGYFA) threads the bilayer.

This sequence belongs to the sodium:solute symporter (SSF) (TC 2.A.21) family. Expressed in the small intestine, kidney and liver.

It localises to the cell membrane. It catalyses the reaction D-mannose(out) + n Na(+)(out) = D-mannose(in) + n Na(+)(in). Electrogenic Na(+)-coupled sugar symporter that may play a primary role in D-mannose and possibly D-fructose and D-glucose transport at the plasma membrane. Transporter activity is driven by a transmembrane Na(+) electrochemical gradient set by the Na(+)/K(+) pump. Exclusively recognizes sugar substrates having a pyranose ring with an axial hydroxyl group on carbon 2. This Homo sapiens (Human) protein is Sodium/glucose cotransporter 4.